A 602-amino-acid polypeptide reads, in one-letter code: Protein nessun dorma (602 aa).

Residues 188 to 208 (AEAKYIQQRLDYLELDLSDAE) are a coiled coil.

Interacts (via N-terminus) with both members of the centralspindlin complex, Pav and Tum. Detected in testis (at protein level). Also expressed in ovary.

The protein localises to the midbody. Required during male meiosis for completion of spermatocyte cytokinesis and possibly also required in female germline cells. Also involved in ring canal formation in male and female germline cells. Not essential for cleavage furrow ingression but is required for contractile ring stability and the attachment of the furrowing membrane to the actomyosin ring in late telophase. Displays high binding affinity for beta-galactosides. The sequence is that of Protein nessun dorma from Drosophila melanogaster (Fruit fly).